A 238-amino-acid chain; its full sequence is Leucine-rich repeat-containing protein 57 (238 aa).

LRR repeat units lie at residues 39-60 (NLRT…MGKF), 62-84 (LLKS…CKLK), 85-106 (KLET…FVQL), 108-129 (ALKT…LFKL), 131-152 (NLDV…VSGL), 153-175 (QAIE…SHCP), 176-196 (RLKV…PPSI), and 201-221 (QISL…RDLE).

The polypeptide is Leucine-rich repeat-containing protein 57 (lrrc57) (Xenopus laevis (African clawed frog)).